Reading from the N-terminus, the 68-residue chain is Protein SlyX homolog (68 aa).

The protein belongs to the SlyX family.

This Brucella melitensis biotype 1 (strain ATCC 23456 / CCUG 17765 / NCTC 10094 / 16M) protein is Protein SlyX homolog.